We begin with the raw amino-acid sequence, 522 residues long: ATP synthase subunit alpha (522 aa).

176–183 (GDRQTGKT) is a binding site for ATP.

Belongs to the ATPase alpha/beta chains family. F-type ATPases have 2 components, CF(1) - the catalytic core - and CF(0) - the membrane proton channel. CF(1) has five subunits: alpha(3), beta(3), gamma(1), delta(1), epsilon(1). CF(0) has four main subunits: a(1), b(1), b'(1) and c(9-12).

Its subcellular location is the cell membrane. The catalysed reaction is ATP + H2O + 4 H(+)(in) = ADP + phosphate + 5 H(+)(out). Produces ATP from ADP in the presence of a proton gradient across the membrane. The alpha chain is a regulatory subunit. This is ATP synthase subunit alpha from Chloroflexus aurantiacus (strain ATCC 29366 / DSM 635 / J-10-fl).